A 381-amino-acid polypeptide reads, in one-letter code: D-rhamnosyltransferase WbpZ (381 aa).

Substrate-binding residues include E19, H116, K206, and V252.

Belongs to the glycosyltransferase group 1 family. Glycosyltransferase 4 subfamily.

The protein localises to the cytoplasm. It carries out the reaction GDP-alpha-D-rhamnose + N-acetyl-alpha-D-glucosaminyl-di-trans,octa-cis-undecaprenyl diphosphate = alpha-D-rhamnosyl-(1-&gt;3)-N-acetyl-alpha-D-glucosaminyl-1-diphospho-di-trans,octa-cis-undecaprenol + GDP + H(+). The enzyme catalyses GDP-alpha-D-rhamnose + N-acetyl-alpha-D-galactosaminyl-di-trans,octa-cis-undecaprenyl diphosphate = alpha-D-rhamnosyl-(1-&gt;3)-N-acetyl-alpha-D-galactosaminyl-1-diphospho-di-trans,octa-cis-undecaprenol + GDP + H(+). It catalyses the reaction N-acetyl-alpha-D-glucosaminyl-di-trans,octa-cis-undecaprenyl diphosphate + GDP-alpha-D-mannose = alpha-D-mannosyl-(1-&gt;3)-N-acetyl-alpha-D-glucosaminyl-di-trans,octa-cis-undecaprenyl diphosphate + GDP + H(+). The catalysed reaction is N-acetyl-alpha-D-galactosaminyl-di-trans,octa-cis-undecaprenyl diphosphate + GDP-alpha-D-mannose = alpha-D-mannosyl-(1-&gt;3)-N-acetyl-alpha-D-galctosaminyl-1-diphospho-di-trans,octa-cis-undecaprenol + GDP + H(+). The protein operates within lipopolysaccharide biosynthesis; LPS oligosaccharide biosynthesis. With respect to regulation, not activated by dithiothreitol (DTT) using GlcNAc-alpha-PO(3)-PO(3)-phenylundecyl (GlcNAc-PP-PhU) as acceptor substrate. 0.25% Triton X-100 and 0.125% NP-40 increases the activity 2.5-fold and 2-fold, respectively. 0.125% octyl glucoside has little effect on activity. Slightly increased activity with Mg(2+) and Pb(2+), while no effect with Mn(2+), Co(2+), Ni(2+), Cu(2+), Zn(2+), Ca(2+) or EDTA. Not inhibited by N-butyryl-galactosamine-alpha-benzyl or N-butyryl-glucosamine-beta-benzyl. Bis-imidazolium salts having aliphatic spacer groups with 4 or 6 carbons have little effect on activity, but spacer groups of 18-22 aliphatic carbons inhibit activity, with the most potent inhibitor being bis-imidazolium salt having a 20-carbon chain spacer length. Non-processive alpha-1,3-D-rhamnosyltransferase. Catalyzes the transfer of one D-rhamnose (D-Rha) residue from donor substrate GDP-D-Rha in alpha-1-3 linkage to both GlcNAc- and GalNAc-diphosphate-lipid acceptor substrates. Is also able to transfer D-mannose (D-Man) to these acceptors at a lower level. Nucleotide sugars GDP-D-Rha, GDP-Fuc, UDP-Gal, UDP-GalNAc, UDP-GlcNAc and CMP-sialic acid cannot act as donor substrates. Only compounds with a diphosphate as the aglycone group can act as acceptor substrates. No activity is detected with compounds containing a diphosphate mimic. Fluorescent undecyl-anthracenyl group-containing compounds, such as GlcNAc-PO(3)-PO(3)-AnthrU and GalNAc-PO(3)-PO(3)-AnthrU, are also good acceptor substrates. Involved in the biosynthesis of the common polysaccharide antigen (CPA), also called A band, which is one of the two major cell surface O-antigens of the P.aeruginosa lipopolysaccharide. Involved in susceptibility to antibiotic colistin. This chain is D-rhamnosyltransferase WbpZ, found in Pseudomonas aeruginosa (strain ATCC 15692 / DSM 22644 / CIP 104116 / JCM 14847 / LMG 12228 / 1C / PRS 101 / PAO1).